We begin with the raw amino-acid sequence, 74 residues long: Large ribosomal subunit protein bL28 (74 aa).

The protein belongs to the bacterial ribosomal protein bL28 family.

The sequence is that of Large ribosomal subunit protein bL28 from Desulforapulum autotrophicum (strain ATCC 43914 / DSM 3382 / VKM B-1955 / HRM2) (Desulfobacterium autotrophicum).